The sequence spans 447 residues: DNA primase DnaG (447 aa).

The Toprim domain occupies 200–274; that stretch reads DSIIVVEGRA…DIDYVARAPE (75 aa). Mg(2+) contacts are provided by Glu206, Asp248, and Asp250. The tract at residues 316–339 is disordered; that stretch reads ERRRGGARKQEYTKKGSLNPQPQV.

This sequence belongs to the archaeal DnaG primase family. As to quaternary structure, forms a ternary complex with MCM helicase and DNA. Component of the archaeal exosome complex. It depends on Mg(2+) as a cofactor.

It carries out the reaction ssDNA + n NTP = ssDNA/pppN(pN)n-1 hybrid + (n-1) diphosphate.. In terms of biological role, RNA polymerase that catalyzes the synthesis of short RNA molecules used as primers for DNA polymerase during DNA replication. Also part of the exosome, which is a complex involved in RNA degradation. Acts as a poly(A)-binding protein that enhances the interaction between heteromeric, adenine-rich transcripts and the exosome. This chain is DNA primase DnaG, found in Pyrococcus furiosus (strain ATCC 43587 / DSM 3638 / JCM 8422 / Vc1).